The following is a 953-amino-acid chain: Translation initiation factor IF-2 (953 aa).

Disordered stretches follow at residues 51-242 and 279-363; these read SKAS…QEAK and TKLK…TERK. Composition is skewed to basic and acidic residues over residues 80–89 and 98–111; these read TGSEHVEKTQ and FKAEREARAKEQAA. Positions 131 to 140 are enriched in polar residues; sequence QPNNHQTNEQ. The segment covering 149–188 has biased composition (basic and acidic residues); the sequence is SQGDTNDKRIERKASNVSPRHDNHQLVGDRNRSFAKENHK. Residues 191 to 207 show a composition bias toward polar residues; it reads RFTNQKKQGRQEPQSKS. The segment covering 229–242 has biased composition (basic and acidic residues); the sequence is RQSETRFRAQQEAK. Over residues 282–291 the composition is skewed to polar residues; it reads KSSNISAKST. Over residues 300–317 the composition is skewed to basic and acidic residues; it reads ARPEKNRELTHHSQEGQK. Positions 322 to 338 are enriched in low complexity; that stretch reads SWNSQNQVRNQKNSNWN. Residues 339–348 show a composition bias toward basic residues; that stretch reads KNKKTKKGKN. Residues 454-623 enclose the tr-type G domain; it reads ERAPVVTIMG…LLVAEVEELK (170 aa). A G1 region spans residues 463 to 470; that stretch reads GHVDHGKT. 463-470 contacts GTP; it reads GHVDHGKT. The segment at 488–492 is G2; it reads GITQH. The tract at residues 509–512 is G3; it reads DTPG. GTP is bound by residues 509–513 and 563–566; these read DTPGH and NKID. Residues 563–566 are G4; it reads NKID. The G5 stretch occupies residues 599-601; the sequence is SAK.

It belongs to the TRAFAC class translation factor GTPase superfamily. Classic translation factor GTPase family. IF-2 subfamily.

Its subcellular location is the cytoplasm. One of the essential components for the initiation of protein synthesis. Protects formylmethionyl-tRNA from spontaneous hydrolysis and promotes its binding to the 30S ribosomal subunits. Also involved in the hydrolysis of GTP during the formation of the 70S ribosomal complex. The polypeptide is Translation initiation factor IF-2 (Streptococcus pyogenes serotype M49 (strain NZ131)).